The chain runs to 183 residues: Photosystem I assembly protein Ycf4 (183 aa).

A run of 2 helical transmembrane segments spans residues 23-43 (WASV…SSYF) and 64-84 (VMSF…LTII).

This sequence belongs to the Ycf4 family.

It is found in the plastid. It localises to the chloroplast thylakoid membrane. Seems to be required for the assembly of the photosystem I complex. This chain is Photosystem I assembly protein Ycf4, found in Stigeoclonium helveticum (Green alga).